A 184-amino-acid chain; its full sequence is Prolyl-tRNA synthetase associated domain-containing protein 1 (184 aa).

It belongs to the PRORSD1 family.

The polypeptide is Prolyl-tRNA synthetase associated domain-containing protein 1 (Prorsd1) (Danio rerio (Zebrafish)).